A 202-amino-acid polypeptide reads, in one-letter code: Large ribosomal subunit protein eL13 (202 aa).

The disordered stretch occupies residues 183–202 (GIREKRAKEKAEAEAEKAKK).

It belongs to the eukaryotic ribosomal protein eL13 family. Component of the large ribosomal subunit. Mature ribosomes consist of a small (40S) and a large (60S) subunit. The 40S subunit contains about 32 different proteins and 1 molecule of RNA (18S). The 60S subunit contains 45 different proteins and 3 molecules of RNA (25S, 5.8S and 5S).

The protein localises to the cytoplasm. Functionally, component of the ribosome, a large ribonucleoprotein complex responsible for the synthesis of proteins in the cell. The small ribosomal subunit (SSU) binds messenger RNAs (mRNAs) and translates the encoded message by selecting cognate aminoacyl-transfer RNA (tRNA) molecules. The large subunit (LSU) contains the ribosomal catalytic site termed the peptidyl transferase center (PTC), which catalyzes the formation of peptide bonds, thereby polymerizing the amino acids delivered by tRNAs into a polypeptide chain. The nascent polypeptides leave the ribosome through a tunnel in the LSU and interact with protein factors that function in enzymatic processing, targeting, and the membrane insertion of nascent chains at the exit of the ribosomal tunnel. This chain is Large ribosomal subunit protein eL13, found in Candida albicans (strain SC5314 / ATCC MYA-2876) (Yeast).